A 268-amino-acid polypeptide reads, in one-letter code: MEFAHLTVLSLFCLAFVGITATSSGEDYWQSIWPNTPLPKTFSDLLIPSGKTNSLPIKSEELKQYSTLFFEHDLHPGKNFILGNTNSVGSIIRPFTKSRQGVTDSIWLANKEKQSLEDFCYSPTAIAEHKHCVSSLKSMIDQVISHFGSTKIKAISSNFAPYQDQYVVEDVKKVGDNAVMCHRLNFEKVVFNCHQVRDTTAYVVSLVASDGTKTKALTVCHHDTRGMNPELLYEALEVTPGTVPVCHFIGNKAAAWVPNHTADNLCVM.

A signal peptide spans 1–25 (MEFAHLTVLSLFCLAFVGITATSSG). Residues 68-259 (LFFEHDLHPG…GNKAAAWVPN (192 aa)) enclose the BURP domain. Asn-259 is a glycosylation site (N-linked (GlcNAc...) asparagine).

As to expression, seed.

It is found in the secreted. In Vicia faba (Broad bean), this protein is Embryonic abundant protein VF30.1.